Here is a 718-residue protein sequence, read N- to C-terminus: MIRSLSYCFLTIYFFLSILPLPNTIACPTRLLCRSDQRDALLEVQKELHVPTTTWNKNVDCCSWDGVTCDAILGELVLSRCKLQGEIPSSIGNLSHLTYLDLSNNQLVGEVPASIGNLNQLESMRLWDNDLKGNIPTSFANLTKLSELYLFGNQFTGGDTVLANLTSLSIIDLSLNYFKSSISADLSGLHNLERFSVYNNSFSGPFPLSLLMIPSLVHIDLSQNHFEGPIDFRNTFSLSRLRVLYVGFNNLDGLIPESISKLVNLEYLDVSHNNFGGQVPRSISKVVNLTSVDLSYNKLEGQVPDFVWRSSKLDYVDLSYNSFNCFAKSVEVIDGASLTMLNLGSNSVDGPFPKWICKVKDLYALDLSNNHFNGSIPQCLKYSTYFHTLNLRNNSLSGVLPNLFIKDSQLRSLDVSSNNLVGKLPKSLINCERIEFLNVKGNKIMDTFPFWLGSLPYLKVLMLGSNAFYGPVYNPSAYLGFPSIRIIDISNNNFVGSLPQDYFANWLEMSLVWSGSDIPQFKYMGNVNFSTYDSIDLVYKGVETDFDRIFEGFNAIDFSGNRFSGHIPGSIGLLSELRLLNLSGNAFTGNIPPSLANITNLESLDLSRNNLSGEIPISLGKLSFLSNTNFSYNHLEGLIPQSTQFATQNCSSFLGNLGLYGFREICGESHHVPVPTTSQQPEEPLSESEDQLLNWIAAAIAFGPGMFCGLVIGHIFTS.

The N-terminal stretch at 1–26 (MIRSLSYCFLTIYFFLSILPLPNTIA) is a signal peptide. Residues 27-695 (CPTRLLCRSD…SESEDQLLNW (669 aa)) are Extracellular-facing. 18 LRR repeats span residues 70-94 (DAIL…IGNL), 95-118 (SHLT…IGNL), 120-141 (QLES…SFAN), 143-165 (TKLS…LANL), 166-188 (TSLS…DLSG), 189-213 (LHNL…LLMI), 214-238 (PSLV…TFSL), 239-261 (SRLR…SISK), 262-286 (LVNL…ISKV), 288-310 (NLTS…VWRS), 312-334 (KLDY…EVID), 335-359 (GASL…ICKV), 360-383 (KDLY…LKYS), 384-406 (TYFH…LFIK), 407-431 (DSQL…LINC), 433-454 (RIEF…WLGS), 455-480 (LPYL…AYLG), and 481-505 (FPSI…YFAN). An N-linked (GlcNAc...) asparagine glycan is attached at N93. N-linked (GlcNAc...) asparagine glycosylation is found at N141 and N164. Residue N199 is glycosylated (N-linked (GlcNAc...) asparagine). N288 carries N-linked (GlcNAc...) asparagine glycosylation. 2 N-linked (GlcNAc...) asparagine glycosylation sites follow: N373 and N393. N528 carries an N-linked (GlcNAc...) asparagine glycan. LRR repeat units lie at residues 550 to 574 (FEGF…IGLL), 575 to 598 (SELR…LANI), 599 to 622 (TNLE…LGKL), and 624 to 647 (FLSN…QFAT). Residues N581, N597, N610, N629, and N649 are each glycosylated (N-linked (GlcNAc...) asparagine). The helical transmembrane segment at 696–716 (IAAAIAFGPGMFCGLVIGHIF) threads the bilayer. The Cytoplasmic segment spans residues 717-718 (TS).

This sequence belongs to the RLP family.

It localises to the cell membrane. The polypeptide is Receptor-like protein 36 (Arabidopsis thaliana (Mouse-ear cress)).